The chain runs to 140 residues: Peptide methionine sulfoxide reductase MsrB (140 aa).

The 123-residue stretch at 10 to 132 (EEDWKSVLTP…NSVSLGFTKE (123 aa)) folds into the MsrB domain. Residues Cys49, Cys52, Cys98, and Cys101 each coordinate Zn(2+). Cys121 functions as the Nucleophile in the catalytic mechanism.

This sequence belongs to the MsrB Met sulfoxide reductase family. Zn(2+) serves as cofactor.

It carries out the reaction L-methionyl-[protein] + [thioredoxin]-disulfide + H2O = L-methionyl-(R)-S-oxide-[protein] + [thioredoxin]-dithiol. This chain is Peptide methionine sulfoxide reductase MsrB, found in Methanosarcina mazei (strain ATCC BAA-159 / DSM 3647 / Goe1 / Go1 / JCM 11833 / OCM 88) (Methanosarcina frisia).